A 748-amino-acid polypeptide reads, in one-letter code: Cytosolic phospholipase A2 (748 aa).

Residues 1 to 178 (MSFIDPYQHI…MKSFLGEENS (178 aa)) are phospholipid binding. The 119-residue stretch at 6–124 (PYQHIVVEHQ…GEKKEVQLTF (119 aa)) folds into the C2 domain. Residues Asp40, Thr41, Asp43, Asn65, Asp93, Ala94, and Asn95 each contribute to the Ca(2+) site. The PLA2c domain maps to 138 to 740 (VCSSTDLRFS…SSVEARRFFN (603 aa)). Ser228 acts as the Nucleophile in catalysis. The segment at 431-459 (SNDSSDSEDESQHPKGTENSEANEEYQNS) is disordered. The segment covering 449–459 (NSEANEEYQNS) has biased composition (polar residues). Residue Ser505 is modified to Phosphoserine; by MAPK. Asp549 serves as the catalytic Proton acceptor.

In terms of processing, activated by phosphorylation on a serine residue.

It is found in the cytoplasm. The protein localises to the cytoplasmic vesicle. It catalyses the reaction a 1,2-diacyl-sn-glycero-3-phosphocholine + H2O = a 1-acyl-sn-glycero-3-phosphocholine + a fatty acid + H(+). The enzyme catalyses a 1-acyl-sn-glycero-3-phosphocholine + H2O = sn-glycerol 3-phosphocholine + a fatty acid + H(+). Stimulated by agonists such as ATP, EGF, thrombin and bradykinin as well as by cytosolic Ca(2+). Selectively hydrolyzes arachidonyl phospholipids in the sn-2 position releasing arachidonic acid. Together with its lysophospholipid activity, it is implicated in the initiation of the inflammatory response. This chain is Cytosolic phospholipase A2 (PLA2G4A), found in Gallus gallus (Chicken).